We begin with the raw amino-acid sequence, 1269 residues long: Furin-like protease 1, isoforms 1/1-X/2 (1269 aa).

Positions 1-57 (MKNDVVRWSRQPTSNTTNSSSSSRSDSNSTHKHRSKSNKLNARQLGSNAARSCQQRS) are disordered. Low complexity predominate over residues 13–28 (TSNTTNSSSSSRSDSN). Residues asparagine 15, asparagine 18, and asparagine 28 are each glycosylated (N-linked (GlcNAc...) asparagine). The segment covering 38–57 (NKLNARQLGSNAARSCQQRS) has biased composition (polar residues). A glycan (N-linked (GlcNAc...) asparagine) is linked at asparagine 108. A helical membrane pass occupies residues 119–139 (VFLLALQFSAVVFLCNINVGF). Over residues 150 to 163 (SAGGSSPAAPSSAP) the composition is skewed to low complexity. Residues 150–187 (SAGGSSPAAPSSAPSSPPTVAVPPPPPPSSALKVDPNG) are disordered. Residues 164–178 (SSPPTVAVPPPPPPS) are compositionally biased toward pro residues. A glycan (N-linked (GlcNAc...) asparagine) is linked at asparagine 333. One can recognise a Peptidase S8 domain in the interval 340-654 (MWYLNRGGGL…YGLMDAAEMV (315 aa)). Residues aspartate 372 and histidine 413 each act as charge relay system in the active site. Asparagine 426 carries N-linked (GlcNAc...) asparagine glycosylation. 2 disulfide bridges follow: cysteine 430/cysteine 579 and cysteine 522/cysteine 552. Catalysis depends on serine 587, which acts as the Charge relay system. Asparagine 606 carries an N-linked (GlcNAc...) asparagine glycan. The 132-residue stretch at 662 to 793 (AVPEQQRCEI…SLIFYGTTQS (132 aa)) folds into the P/Homo B domain. Cysteine 669 and cysteine 695 are disulfide-bonded. N-linked (GlcNAc...) asparagine glycosylation is found at asparagine 727 and asparagine 814. Disordered regions lie at residues 796–875 (PNDP…PPKQ), 891–1015 (ANGK…NSRI), 1031–1050 (ELEPYENSSPKGKPKQAKQG), and 1057–1083 (LFKPTNGGNSRQGNTKKSPSVPPPSQT). Low complexity-rich tracts occupy residues 811-821 (TTPNSSSTTSN) and 835-851 (PNNFGSSPSGGSKLPLG). Asparagine 857 carries an N-linked (GlcNAc...) asparagine glycan. A compositionally biased stretch (polar residues) spans 858 to 868 (KSSYVTNNPLL). Residues asparagine 897 and asparagine 908 are each glycosylated (N-linked (GlcNAc...) asparagine). Composition is skewed to low complexity over residues 905–915 (NKGNKSNNGNK) and 929–940 (TTQSTIIQTSTS). Basic and acidic residues predominate over residues 975–985 (KSYDEKSRKVV). An N-linked (GlcNAc...) asparagine glycan is attached at asparagine 994. Polar residues predominate over residues 1005 to 1014 (ESTTTSSNSR). Residues 1062–1074 (NGGNSRQGNTKKS) are compositionally biased toward polar residues. The chain crosses the membrane as a helical span at residues 1233 to 1253 (LGLSLLFFMIMQVFFLNFKHA).

This sequence belongs to the peptidase S8 family. Furin subfamily. Requires Ca(2+) as cofactor. In terms of tissue distribution, in adults, isoform 1-X is expressed in CNS, fat body and female reproductive tissues, and in embryos, in CNS, tracheal pits, hindgut, posterior spiracles and anal pads.

The protein resides in the golgi apparatus membrane. The catalysed reaction is Release of mature proteins from their proproteins by cleavage of -Arg-Xaa-Yaa-Arg-|-Zaa- bonds, where Xaa can be any amino acid and Yaa is Arg or Lys. Releases albumin, complement component C3 and von Willebrand factor from their respective precursors.. Furin is likely to represent the ubiquitous endoprotease activity within constitutive secretory pathways and capable of cleavage at the RX(K/R)R consensus motif. The chain is Furin-like protease 1, isoforms 1/1-X/2 (Fur1) from Drosophila melanogaster (Fruit fly).